The following is a 276-amino-acid chain: NAD kinase (276 aa).

The active-site Proton acceptor is the D67. Residues 67-68 (DG), R72, 136-137 (ND), K147, R164, D166, 177-182 (TAYALS), A201, and Q235 contribute to the NAD(+) site.

Belongs to the NAD kinase family. It depends on a divalent metal cation as a cofactor.

It is found in the cytoplasm. It catalyses the reaction NAD(+) + ATP = ADP + NADP(+) + H(+). Involved in the regulation of the intracellular balance of NAD and NADP, and is a key enzyme in the biosynthesis of NADP. Catalyzes specifically the phosphorylation on 2'-hydroxyl of the adenosine moiety of NAD to yield NADP. In Thermococcus sibiricus (strain DSM 12597 / MM 739), this protein is NAD kinase.